A 508-amino-acid chain; its full sequence is Lysine--tRNA ligase (508 aa).

Mg(2+) is bound by residues E418 and E425.

This sequence belongs to the class-II aminoacyl-tRNA synthetase family. Homodimer. Mg(2+) serves as cofactor.

The protein resides in the cytoplasm. It carries out the reaction tRNA(Lys) + L-lysine + ATP = L-lysyl-tRNA(Lys) + AMP + diphosphate. In Burkholderia pseudomallei (strain K96243), this protein is Lysine--tRNA ligase.